Consider the following 481-residue polypeptide: uncharacterized protein (481 aa).

The next 13 membrane-spanning stretches (helical) occupy residues 3 to 23 (YLPM…LLHG), 33 to 53 (FITA…YYYF), 75 to 95 (QAII…GMGE), 99 to 119 (NNMF…IVLA), 122 to 142 (IFNL…LVFL), 155 to 175 (YMIM…FLLA), 196 to 216 (IYGG…LPPF), 241 to 261 (FVLV…DYFA), 264 to 284 (HAVL…MALL), 303 to 323 (VATG…FHAI), 351 to 371 (GGLL…KLAI), 400 to 420 (IIMI…FYLI), and 443 to 463 (VFSL…PDIV).

It is found in the cell membrane. This is an uncharacterized protein from Methanocaldococcus jannaschii (strain ATCC 43067 / DSM 2661 / JAL-1 / JCM 10045 / NBRC 100440) (Methanococcus jannaschii).